The sequence spans 212 residues: Probable GTP-binding protein EngB (212 aa).

The region spanning 25-199 (FGYEVAFAGR…WAKLDEWMEY (175 aa)) is the EngB-type G domain. Residues 33–40 (GRSNAGKS), 60–64 (GRTQL), 78–81 (DLPG), 145–148 (TKSD), and 178–180 (FSS) contribute to the GTP site. Mg(2+)-binding residues include Ser40 and Thr62.

Belongs to the TRAFAC class TrmE-Era-EngA-EngB-Septin-like GTPase superfamily. EngB GTPase family. It depends on Mg(2+) as a cofactor.

Its function is as follows. Necessary for normal cell division and for the maintenance of normal septation. The chain is Probable GTP-binding protein EngB from Hydrogenovibrio crunogenus (strain DSM 25203 / XCL-2) (Thiomicrospira crunogena).